Consider the following 347-residue polypeptide: BSD domain-containing protein C22A12.14c (347 aa).

Threonine 123 and threonine 125 each carry phosphothreonine. The 53-residue stretch at 167–219 (WEKEISIDGKTEEISLLLEEYPDLRKQMESLVPSEVSYDDFWKRFFWHKEVVQ) folds into the BSD domain. The segment at 229-347 (DEEEIFSWGD…DDDEDDDDWE (119 aa)) is disordered. Phosphoserine occurs at positions 235, 241, and 246. The segment covering 240–251 (RSDEEESDNEQV) has biased composition (acidic residues). Over residues 297 to 312 (HDGEVDGEVKEEEENK) the composition is skewed to basic and acidic residues. Positions 313-325 (VSSSSNIEASQSS) are enriched in low complexity. A compositionally biased stretch (basic and acidic residues) spans 327–337 (EVKDEANRKVD). Over residues 338 to 347 (DDDEDDDDWE) the composition is skewed to acidic residues.

It localises to the cytoplasm. In Schizosaccharomyces pombe (strain 972 / ATCC 24843) (Fission yeast), this protein is BSD domain-containing protein C22A12.14c.